The sequence spans 501 residues: Histone deacetylase 19 (501 aa).

Residues 17–329 (RKVCYFYDPE…WCYETGVALG (313 aa)) form a histone deacetylase region. Residue His149 is the Proton donor/acceptor of the active site. Residues Asp184, His186, and Asp272 each coordinate Zn(2+). The interval 383–501 (HAPSVPFQER…GAEQAFPPKT (119 aa)) is disordered. Over residues 397–407 (ETPEVDEDQED) the composition is skewed to acidic residues. At Ser416 the chain carries Phosphoserine. Basic and acidic residues-rich tracts occupy residues 422-457 (DDRK…KGCE) and 479-488 (ASVKMEEEGT).

It belongs to the histone deacetylase family. HD type 1 subfamily. In terms of assembly, interacts with SIN3, SAP18 and TPR1. Interacts with CDKE-1, MED14 and LUG. Interacts with TPL. Interacts with AHL22. Requires Zn(2+) as cofactor. Highly expressed in leaves, stems, flowers and young siliques.

Its subcellular location is the nucleus. It carries out the reaction N(6)-acetyl-L-lysyl-[histone] + H2O = L-lysyl-[histone] + acetate. Its function is as follows. Responsible for the deacetylation of lysine residues on the N-terminal part of the core histones (H2A, H2B, H3 and H4). Histone deacetylation gives a tag for epigenetic repression and plays an important role in transcriptional regulation, cell cycle progression and developmental events. Histone deacetylases act via the formation of large multiprotein complexes. HDA19 is involved in jasmonic acid and ethylene signaling of pathogen response. Part of a repressor complex including APETALA2 (AP2) and TOPLESS (TPL) that control the expression domains of numerous floral organ identity genes. Involved in negative regulation of salinity stress response. Represses the expression of stress tolerance-related genes, genes coding for late embryogenesis abundant (LEA) proteins that prevent protein aggregation, and positive regulators of abscisic acid (ABA) signaling, such as ABI5 and NAC019. The sequence is that of Histone deacetylase 19 from Arabidopsis thaliana (Mouse-ear cress).